The chain runs to 426 residues: Vacuole membrane protein hfl11 (426 aa).

Helical transmembrane passes span 39-59, 73-93, 133-153, 172-192, and 223-243; these read SVVRILMMIVIYSSVSFLSVY, IYEAFALYCFFCLLIDYLGGE, GILQYTWLKPFLVIAVLLTKV, IGLVYNISITLSLYSLTTFWV, and VLSITNWLGLLNGTGWIYSLL. Serine 364 is subject to Phosphoserine. The segment at 386–409 is ATG8-interacting region; that stretch reads LQFEIDDEMEPLYNQAKQMRYGDY.

The protein belongs to the TMEM184 family. Interacts with atg8.

Its subcellular location is the vacuole membrane. Functionally, vacuole membrane protein that recruits ATG8 to facilitate the degradation of vacuolar integral membrane proteins during early-stationary vacuole turnover (EVT) when cells enter stationary phase. In Schizosaccharomyces pombe (strain 972 / ATCC 24843) (Fission yeast), this protein is Vacuole membrane protein hfl11.